A 496-amino-acid chain; its full sequence is MARLSSLLYFSITVLIFLHGSTAQQFPNECQLDQLNALEPSHVLKAEAGRIEVWDHHAPQLRCSGVSFVRYIIESQGLYLPSFLNTANVSFVAKGQGLMGRVVPGCAETFQDSSVFQPGSGSPFGEGQGQGQQGQGQGQGQGQGKGQQGQGKGQQGQSQGQQGQGQGFRDMHQKVEHIRSGDTIATHPGVAQWFYNNGNQPLVIVAVMDLASHQNQLDRNPSQFYLAGKNPQGQSWLHGRGQQPQNNILNGFSPEVLAQAFKIDVRTAQQLQNQQDNRGNIVRVQGPFGVIRPPLKSQRPQETEANGLEETICSARCTDNLDDPSNADVYKPQLGYISILNSYDLPILRVLRLSALRGSIRQNAMVLPQWKSKSNAVLYVTDGEAQIQVVNDNGDRVFDGQVSQGQLLSIPQGFSVVKRATSDQFRWIEFKTNANAQINTLAGRTSVMRGLPLEVIANGYQISLEEARRVKFNTIETTLTHSSGPASYGRPRKADA.

The first 23 residues, 1–23 (MARLSSLLYFSITVLIFLHGSTA), serve as a signal peptide directing secretion. 2 cysteine pairs are disulfide-bonded: cysteine 30–cysteine 63 and cysteine 106–cysteine 313. Cupin type-1 domains follow at residues 35–269 (LNAL…RTAQ) and 319–468 (DNLD…EEAR). A Phosphothreonine modification is found at threonine 109. Positions 114 to 170 (SVFQPGSGSPFGEGQGQGQQGQGQGQGQGQGKGQQGQGKGQQGQSQGQQGQGQGFRD) are disordered. A compositionally biased stretch (gly residues) spans 122–154 (SPFGEGQGQGQQGQGQGQGQGQGKGQQGQGKGQ). Tyrosine 336 is subject to Phosphotyrosine. Residue serine 338 is modified to Phosphoserine. Threonine 432 is subject to Phosphothreonine.

It belongs to the 11S seed storage protein (globulins) family. Hexamer; each subunit is composed of an acidic and a basic chain derived from a single precursor and linked by a disulfide bond.

In terms of biological role, this is a seed storage protein. The sequence is that of Cruciferin BnC2 (BnC2) from Brassica napus (Rape).